The chain runs to 107 residues: Nucleoid-associated protein Mmar10_0436 (107 aa).

This sequence belongs to the YbaB/EbfC family. In terms of assembly, homodimer.

Its subcellular location is the cytoplasm. The protein resides in the nucleoid. Functionally, binds to DNA and alters its conformation. May be involved in regulation of gene expression, nucleoid organization and DNA protection. The sequence is that of Nucleoid-associated protein Mmar10_0436 from Maricaulis maris (strain MCS10) (Caulobacter maris).